The primary structure comprises 387 residues: Patatin-11 (387 aa).

An N-terminal signal peptide occupies residues Met1–Ala23. One can recognise a PNPLA domain in the interval Leu32–Leu230. The GXGXXG motif lies at Gly36–Gly41. Positions Gly75–Gly79 match the GXSXG motif. Ser77 functions as the Nucleophile in the catalytic mechanism. An N-linked (GlcNAc...) asparagine glycan is attached at Asn115. Asp216 serves as the catalytic Proton acceptor. Residues Asp216 to Gly218 carry the DGA/G motif. Residues Glu322 to Ala385 adopt a coiled-coil conformation. N-linked (GlcNAc...) asparagine glycosylation is present at Asn326.

The protein belongs to the patatin family. As to expression, tuber.

The protein localises to the vacuole. Probable lipolytic acyl hydrolase (LAH), an activity which is thought to be involved in the response of tubers to pathogens. In Solanum tuberosum (Potato), this protein is Patatin-11.